The sequence spans 443 residues: Phosphoglucosamine mutase (443 aa).

S101 serves as the catalytic Phosphoserine intermediate. The Mg(2+) site is built by S101, D239, D241, and D243. S101 is subject to Phosphoserine.

It belongs to the phosphohexose mutase family. Mg(2+) is required as a cofactor. Activated by phosphorylation.

It carries out the reaction alpha-D-glucosamine 1-phosphate = D-glucosamine 6-phosphate. In terms of biological role, catalyzes the conversion of glucosamine-6-phosphate to glucosamine-1-phosphate. This is Phosphoglucosamine mutase from Francisella tularensis subsp. tularensis (strain WY96-3418).